The sequence spans 427 residues: Glutamate-1-semialdehyde 2,1-aminomutase (427 aa).

K265 is subject to N6-(pyridoxal phosphate)lysine.

This sequence belongs to the class-III pyridoxal-phosphate-dependent aminotransferase family. HemL subfamily. As to quaternary structure, homodimer. Requires pyridoxal 5'-phosphate as cofactor.

It localises to the cytoplasm. It catalyses the reaction (S)-4-amino-5-oxopentanoate = 5-aminolevulinate. It functions in the pathway porphyrin-containing compound metabolism; protoporphyrin-IX biosynthesis; 5-aminolevulinate from L-glutamyl-tRNA(Glu): step 2/2. The sequence is that of Glutamate-1-semialdehyde 2,1-aminomutase from Pseudomonas paraeruginosa (strain DSM 24068 / PA7) (Pseudomonas aeruginosa (strain PA7)).